Here is a 247-residue protein sequence, read N- to C-terminus: E3 ubiquitin ligase TRIM40 (247 aa).

An RING-type zinc finger spans residues 12-55 (CPICLDPLKEAVSTDCRHLFCRMCLIRHMDKASVSGVLSCPVCR). The segment at 64–105 (GDNYICHTHQKRVCRFCESSRHLLCEECLQSPEHRAHTELSI) adopts a B box-type zinc-finger fold. 4 residues coordinate Zn(2+): C69, H72, C91, and H97. Positions 111–148 (HYKERLNRRSRKLRKDLGDLQRLKAQEEKMLQALQVDW) form a coiled coil.

Belongs to the TRIM/RBCC family. Interacts with NEDD8.

It catalyses the reaction S-ubiquitinyl-[E2 ubiquitin-conjugating enzyme]-L-cysteine + [acceptor protein]-L-lysine = [E2 ubiquitin-conjugating enzyme]-L-cysteine + N(6)-ubiquitinyl-[acceptor protein]-L-lysine.. Functionally, E3 ubiquitin-protein ligase that plays a role in the limitation of the innate immune response. Mediates inhibition of the RLR signaling pathway by ubiquitinating RIGI and IFIH1 receptors, leading to their proteasomal degradation. Also promotes the neddylation of IKBKG/NEMO, stabilizing NFKBIA, and thereby inhibiting of NF-kappa-B nuclear translocation and activation. This Rattus norvegicus (Rat) protein is E3 ubiquitin ligase TRIM40 (Trim40).